Here is a 567-residue protein sequence, read N- to C-terminus: Signal transducer and activator of transcription b (567 aa).

In terms of domain architecture, SH2 spans 449-548; that stretch reads WYDGLVYGFC…LGGRNKPRIR (100 aa).

It belongs to the transcription factor STAT family. May interact with sodium-dependent transporter snf-12; the interaction is probably direct.

It is found in the cytoplasm. Its subcellular location is the nucleus. The protein resides in the vesicle. Carries out a dual function: signal transduction and activation of transcription. Required, in concert with transcription factor elt-3, for up-regulation of the vacuolar H(+)-ATPase and acceleration of lysosome maturation at molt. As part of the innate immune response to molting and injury of the adult epidermis, positively regulates the expression of epidermal antimicrobial peptides, such as nlp-29. Through positively modulating the expression of epidermal antimicrobial peptides, such as nlp-29, plays a role in resistance to fungal infection and in the response to physical wounding and phorbol ester PMA treatment. Functions cell autonomously in the epidermis, in concert with sodium-dependent transporter snf-12, probably acting at vesicular membranes, downstream of a p38 MAPK/pmk-1 pathway. The sequence is that of Signal transducer and activator of transcription b from Caenorhabditis elegans.